The following is a 294-amino-acid chain: Glycine--tRNA ligase alpha subunit (294 aa).

It belongs to the class-II aminoacyl-tRNA synthetase family. As to quaternary structure, tetramer of two alpha and two beta subunits.

The protein resides in the cytoplasm. It catalyses the reaction tRNA(Gly) + glycine + ATP = glycyl-tRNA(Gly) + AMP + diphosphate. The sequence is that of Glycine--tRNA ligase alpha subunit from Trichodesmium erythraeum (strain IMS101).